A 298-amino-acid polypeptide reads, in one-letter code: MQDFSSLLLKLQEYWKNQGCLVIQPYDIPAGAGTFHPATLLRSLDKKPWNVAYVAPSRRPTDGRYGENPNRLGSYYQFQVVIKPSPSNIQELYLKSLEVLGINLNEHDIRFVEDNWESPTLGAWGLGWEVWLDGMEVTQFTYFQQVGGIACSPIPVEITYGLERLAMYVQKVENILEIEWAKNNHDSVRYAQVHLESEYQFSKYHFEVASVTRLLEMFKNAQAEALHCLKNKLPLPAYDLVMLCSHFFNILDARKAISVAERQNYILQIRDLAKGCTILYKEQEEEREERLKNALTKA.

The protein belongs to the class-II aminoacyl-tRNA synthetase family. Tetramer of two alpha and two beta subunits.

It is found in the cytoplasm. It carries out the reaction tRNA(Gly) + glycine + ATP = glycyl-tRNA(Gly) + AMP + diphosphate. This is Glycine--tRNA ligase alpha subunit from Helicobacter pylori (strain G27).